The chain runs to 401 residues: Argininosuccinate synthase (401 aa).

8-16 serves as a coordination point for ATP; sequence AYSGGLDTS. Y85 is a binding site for L-citrulline. G115 contributes to the ATP binding site. Residues T117, N121, and D122 each contribute to the L-aspartate site. N121 is a binding site for L-citrulline. Residues R125, S173, E258, and Y270 each contribute to the L-citrulline site.

The protein belongs to the argininosuccinate synthase family. Type 1 subfamily. In terms of assembly, homotetramer.

Its subcellular location is the cytoplasm. The enzyme catalyses L-citrulline + L-aspartate + ATP = 2-(N(omega)-L-arginino)succinate + AMP + diphosphate + H(+). It participates in amino-acid biosynthesis; L-arginine biosynthesis; L-arginine from L-ornithine and carbamoyl phosphate: step 2/3. This is Argininosuccinate synthase from Staphylococcus aureus (strain MSSA476).